A 1220-amino-acid polypeptide reads, in one-letter code: DNA-directed RNA polymerase subunit beta (1220 aa).

It belongs to the RNA polymerase beta chain family. The RNAP catalytic core consists of 2 alpha, 1 beta, 1 beta' and 1 omega subunit. When a sigma factor is associated with the core the holoenzyme is formed, which can initiate transcription.

It catalyses the reaction RNA(n) + a ribonucleoside 5'-triphosphate = RNA(n+1) + diphosphate. DNA-dependent RNA polymerase catalyzes the transcription of DNA into RNA using the four ribonucleoside triphosphates as substrates. The protein is DNA-directed RNA polymerase subunit beta of Mesomycoplasma hyopneumoniae (strain 232) (Mycoplasma hyopneumoniae).